Reading from the N-terminus, the 554-residue chain is Esterase cest-33 (554 aa).

Residue G2 is the site of N-myristoyl glycine attachment. Residues C76 and C98 are joined by a disulfide bond. S208 functions as the Acyl-ester intermediate in the catalytic mechanism. Residues E331 and H446 each act as charge relay system in the active site.

The protein belongs to the type-B carboxylesterase/lipase family.

The protein localises to the cytoplasm. The protein resides in the cell membrane. It catalyses the reaction a carboxylic ester + H2O = an alcohol + a carboxylate + H(+). The protein is Esterase cest-33 of Caenorhabditis elegans.